The chain runs to 227 residues: Phosphoglycolate phosphatase (227 aa).

Asp11 acts as the Nucleophile in catalysis. 2 residues coordinate Mg(2+): Asp11 and Asp13. Residue Lys155 participates in substrate binding. Positions 178 and 182 each coordinate Mg(2+).

It belongs to the archaeal SPP-like hydrolase family. Mg(2+) is required as a cofactor.

It catalyses the reaction 2-phosphoglycolate + H2O = glycolate + phosphate. In terms of biological role, catalyzes the dephosphorylation of 2-phosphoglycolate. The protein is Phosphoglycolate phosphatase of Haloarcula marismortui (strain ATCC 43049 / DSM 3752 / JCM 8966 / VKM B-1809) (Halobacterium marismortui).